Here is a 147-residue protein sequence, read N- to C-terminus: UPAR/Ly6 domain-containing protein CG9338 (147 aa).

Residues 1-23 (MVSSVKMILALTVLATVACTGYA) form the signal peptide. Residues 24 to 126 (IKCYQCDSLT…VCTEDECNGT (103 aa)) are Extracellular-facing. 5 disulfides stabilise this stretch: Cys26/Cys72, Cys29/Cys37, Cys51/Cys89, Cys101/Cys115, and Cys118/Cys123. Residue Asn68 is glycosylated (N-linked (GlcNAc...) asparagine). Residue Asn124 is the site of GPI-anchor amidated asparagine attachment. The propeptide at 125–147 (GTSSLAPIAGVILLFFGLARLLA) is removed in mature form. Residues 127 to 147 (SSLAPIAGVILLFFGLARLLA) traverse the membrane as a helical segment.

The protein belongs to the quiver family.

The protein resides in the cell membrane. Functionally, may be involved in regulating neuron excitability. The protein is UPAR/Ly6 domain-containing protein CG9338 of Drosophila melanogaster (Fruit fly).